Here is a 54-residue protein sequence, read N- to C-terminus: uncharacterized protein (54 aa).

An N-terminal signal peptide occupies residues 1 to 23; it reads MKELIFFLLIIVILFVVFMVVSS.

This is an uncharacterized protein from Acheta domesticus (House cricket).